We begin with the raw amino-acid sequence, 169 residues long: 2-C-methyl-D-erythritol 2,4-cyclodiphosphate synthase (169 aa).

Residues Asp13 and His15 each contribute to the a divalent metal cation site. 4-CDP-2-C-methyl-D-erythritol 2-phosphate-binding positions include 13-15 and 40-41; these read DIH and HS. His48 provides a ligand contact to a divalent metal cation. Residues 62–64, 138–141, and Arg148 contribute to the 4-CDP-2-C-methyl-D-erythritol 2-phosphate site; these read DIG and TTNE.

This sequence belongs to the IspF family. As to quaternary structure, homotrimer. The cofactor is a divalent metal cation.

The enzyme catalyses 4-CDP-2-C-methyl-D-erythritol 2-phosphate = 2-C-methyl-D-erythritol 2,4-cyclic diphosphate + CMP. It participates in isoprenoid biosynthesis; isopentenyl diphosphate biosynthesis via DXP pathway; isopentenyl diphosphate from 1-deoxy-D-xylulose 5-phosphate: step 4/6. In terms of biological role, involved in the biosynthesis of isopentenyl diphosphate (IPP) and dimethylallyl diphosphate (DMAPP), two major building blocks of isoprenoid compounds. Catalyzes the conversion of 4-diphosphocytidyl-2-C-methyl-D-erythritol 2-phosphate (CDP-ME2P) to 2-C-methyl-D-erythritol 2,4-cyclodiphosphate (ME-CPP) with a corresponding release of cytidine 5-monophosphate (CMP). The sequence is that of 2-C-methyl-D-erythritol 2,4-cyclodiphosphate synthase from Akkermansia muciniphila (strain ATCC BAA-835 / DSM 22959 / JCM 33894 / BCRC 81048 / CCUG 64013 / CIP 107961 / Muc).